Reading from the N-terminus, the 141-residue chain is Hemoglobin subunit alpha (141 aa).

Positions 1 to 141 constitute a Globin domain; that stretch reads VLSPADKNNV…VSTVLTSKYR (141 aa). Phosphoserine is present on serine 3. Residues lysine 7 and lysine 11 each carry the N6-succinyllysine modification. Residue lysine 16 is modified to N6-acetyllysine; alternate. N6-succinyllysine; alternate is present on lysine 16. Position 24 is a phosphotyrosine (tyrosine 24). The residue at position 35 (serine 35) is a Phosphoserine. At lysine 40 the chain carries N6-succinyllysine. Serine 49 is subject to Phosphoserine. An O2-binding site is contributed by histidine 58. A heme b-binding site is contributed by histidine 87. Serine 102 is subject to Phosphoserine. Threonine 108 is subject to Phosphothreonine. Serine 124 and serine 131 each carry phosphoserine. A phosphothreonine mark is found at threonine 134 and threonine 137. A Phosphoserine modification is found at serine 138.

This sequence belongs to the globin family. In terms of assembly, heterotetramer of two alpha chains and two beta chains. Red blood cells.

Involved in oxygen transport from the lung to the various peripheral tissues. Functionally, hemopressin acts as an antagonist peptide of the cannabinoid receptor CNR1. Hemopressin-binding efficiently blocks cannabinoid receptor CNR1 and subsequent signaling. The chain is Hemoglobin subunit alpha (HBA) from Urocitellus townsendii (Townsend's ground squirrel).